The sequence spans 1170 residues: Structural maintenance of chromosomes protein 2 (1170 aa).

An ATP-binding site is contributed by 32-39 (GLNGSGKS). Residues 172 to 469 (KMFEDRREKA…DKLRARLVEY (298 aa)) adopt a coiled-coil conformation. The SMC hinge domain maps to 523-641 (VHGVVGQLFQ…CEDPETAKKI (119 aa)). The stretch at 678 to 1027 (VDIQKYNQIQ…ISKLNEYKRE (350 aa)) forms a coiled coil.

It belongs to the SMC family. SMC2 subfamily. As to quaternary structure, forms a heterodimer with SMC4. Component of the condensin complex, which contains the SMC2 and SMC4 heterodimer, and three non SMC subunits that probably regulate the complex: BRN1, YCS4 and YCG1/YCS5.

It localises to the nucleus. Its subcellular location is the cytoplasm. It is found in the chromosome. Central component of the condensin complex, a complex required for conversion of interphase chromatin into mitotic-like condense chromosomes. The condensin complex probably introduces positive supercoils into relaxed DNA in the presence of type I topoisomerases and converts nicked DNA into positive knotted forms in the presence of type II topoisomerases. This is Structural maintenance of chromosomes protein 2 (SMC2) from Saccharomyces cerevisiae (strain ATCC 204508 / S288c) (Baker's yeast).